Reading from the N-terminus, the 275-residue chain is 3-methyl-2-oxobutanoate hydroxymethyltransferase (275 aa).

D44 and D83 together coordinate Mg(2+). 3-methyl-2-oxobutanoate contacts are provided by residues 44–45, D83, and K113; that span reads DS. E115 is a Mg(2+) binding site. The active-site Proton acceptor is the E182.

It belongs to the PanB family. As to quaternary structure, homodecamer; pentamer of dimers. The cofactor is Mg(2+).

It is found in the cytoplasm. It catalyses the reaction 3-methyl-2-oxobutanoate + (6R)-5,10-methylene-5,6,7,8-tetrahydrofolate + H2O = 2-dehydropantoate + (6S)-5,6,7,8-tetrahydrofolate. The protein operates within cofactor biosynthesis; (R)-pantothenate biosynthesis; (R)-pantoate from 3-methyl-2-oxobutanoate: step 1/2. Its function is as follows. Catalyzes the reversible reaction in which hydroxymethyl group from 5,10-methylenetetrahydrofolate is transferred onto alpha-ketoisovalerate to form ketopantoate. This is 3-methyl-2-oxobutanoate hydroxymethyltransferase from Enterococcus faecalis (strain ATCC 700802 / V583).